The primary structure comprises 176 residues: Small ribosomal subunit protein uS5 (176 aa).

The 64-residue stretch at 11–74 (LSEVLVDVNR…QAAKKRMMKV (64 aa)) folds into the S5 DRBM domain.

This sequence belongs to the universal ribosomal protein uS5 family. As to quaternary structure, part of the 30S ribosomal subunit. Contacts proteins S4 and S8.

Functionally, with S4 and S12 plays an important role in translational accuracy. Its function is as follows. Located at the back of the 30S subunit body where it stabilizes the conformation of the head with respect to the body. The protein is Small ribosomal subunit protein uS5 of Rickettsia africae (strain ESF-5).